Reading from the N-terminus, the 324-residue chain is NADH-quinone oxidoreductase subunit H 2 (324 aa).

Helical transmembrane passes span 1–21 (MIGM…LLVV), 77–97 (ILAP…VAFG), 109–129 (VMFL…GALA), 147–167 (LGYE…AGSL), 179–199 (VWFV…GVAA), 214–234 (LVAG…FLGE), 238–258 (VLLV…GPVW), 263–283 (LPGP…FIWI), and 298–318 (FAWK…GLIV).

This sequence belongs to the complex I subunit 1 family. In terms of assembly, NDH-1 is composed of 14 different subunits. Subunits NuoA, H, J, K, L, M, N constitute the membrane sector of the complex.

Its subcellular location is the cell inner membrane. It catalyses the reaction a quinone + NADH + 5 H(+)(in) = a quinol + NAD(+) + 4 H(+)(out). NDH-1 shuttles electrons from NADH, via FMN and iron-sulfur (Fe-S) centers, to quinones in the respiratory chain. The immediate electron acceptor for the enzyme in this species is believed to be ubiquinone. Couples the redox reaction to proton translocation (for every two electrons transferred, four hydrogen ions are translocated across the cytoplasmic membrane), and thus conserves the redox energy in a proton gradient. This subunit may bind ubiquinone. The protein is NADH-quinone oxidoreductase subunit H 2 of Rhodopseudomonas palustris (strain BisB18).